A 459-amino-acid chain; its full sequence is FAD-dependent monooxygenase CTB5 (459 aa).

The FAD-binding PCMH-type domain maps to 10-187 (SDLHPSCIAL…TAVTLKAFEQ (178 aa)).

This sequence belongs to the oxygen-dependent FAD-linked oxidoreductase family.

It participates in mycotoxin biosynthesis. In terms of biological role, FAD-dependent monooxygenase; part of the gene cluster that mediates the biosynthesis of cercosporin, a light-activated, non-host-selective toxin. The perylenequinone chromophore of cercosporin absorbs light energy to attain an electronically-activated triplet state and produces active oxygen species such as the hydroxyl radical, superoxide, hydrogen peroxide or singlet oxygen upon reaction with oxygen molecules. These reactive oxygen species cause damage to various cellular components including lipids, proteins and nucleic acids. The first step of cercosporin biosynthesis is performed by the polyketide synthase CTB1 which catalyzes the formation of nor-toralactone. The starter unit acyltransferase (SAT) domain of CTB1 initiates polyketide extension by the selective utilization of acetyl-CoA, which is elongated to the heptaketide in the beta-ketoacyl synthase (KS) domain by successive condensations with six malonyl units introduced by the malonyl acyltransferase (MAT) domain. The product template (PT) domain catalyzes C4-C9 and C2-C11 aldol cyclizations and dehydrations to a trihydroxynaphthalene, which is thought to be delivered to the thioesterase (TE) domain for product release. The bifunctional enzyme CTB3 then methylates nor-toralactone to toralactone before conducting an unusual oxidative aromatic ring opening. The O-methyltransferase CTB2 further methylates the nascent OH-6 of the CBT3 product, blocking further oxidation at this site before the reductase CTB6 reduces the 2-oxopropyl ketone at position C7, giving naphthalene. The FAD-dependent monooxygenase CTB5 in concert with the multicopper oxidase CTB12 are responsible for homodimerization of naphthalene with CTB7 installing the dioxepine moiety, finally producing cercosporin. The fasciclin domain-containing protein CTB11 might act with CTB5 and CTB12 whereas the roles of CTB9 and CTB10 have still to be elucidated. This Cercospora nicotianae (Barn spot disease fungus) protein is FAD-dependent monooxygenase CTB5.